The chain runs to 235 residues: MAKSDIETGGGNELYPGMKESSELRWAFIRKLYSILSLQLLVTVGVSAVVYFVRPIPEFITETHRGLAVFFVILLLPLLLLWPLLAFEKKHPINCIVLSIFTLSISFSVGICCSLSQGRIVLEAAILTAVMVFGLTIYTFWAVKRGHDFSFLGPFLFGALLIILVFTLLQIFHPLGKLSSMIFSGIASIVFCGYIIFDTNQLIKKLNYDEYITAAIRLYLDVMNLFLSLLGIISN.

The next 7 helical transmembrane spans lie at 33–53 (YSILSLQLLVTVGVSAVVYFV), 67–87 (LAVFFVILLLPLLLLWPLLAF), 95–115 (CIVLSIFTLSISFSVGICCSL), 120–140 (IVLEAAILTAVMVFGLTIYTF), 149–169 (FSFLGPFLFGALLIILVFTLL), 178–198 (LSSMIFSGIASIVFCGYIIFD), and 212–232 (ITAAIRLYLDVMNLFLSLLGI).

It belongs to the BI1 family. As to expression, expressed at very low in leaves.

The protein resides in the membrane. Functionally, (Microbial infection) Facilitates the development of the powdery mildew fungus E.cruciferarum. (Microbial infection) May prevent cell death upon A.alternata f.sp. lycopersici (AAL) toxin treatment. In Arabidopsis thaliana (Mouse-ear cress), this protein is Protein LIFEGUARD 1.